The chain runs to 229 residues: Small ribosomal subunit protein uS3 (229 aa).

The region spanning 39-109 (MRKYIKEQLM…QVNIDIVEIR (71 aa)) is the KH type-2 domain. A disordered region spans residues 210-229 (VVSQQNSRPSGPRGPRRPRA).

The protein belongs to the universal ribosomal protein uS3 family. Part of the 30S ribosomal subunit. Forms a tight complex with proteins S10 and S14.

Binds the lower part of the 30S subunit head. Binds mRNA in the 70S ribosome, positioning it for translation. The polypeptide is Small ribosomal subunit protein uS3 (Akkermansia muciniphila (strain ATCC BAA-835 / DSM 22959 / JCM 33894 / BCRC 81048 / CCUG 64013 / CIP 107961 / Muc)).